Reading from the N-terminus, the 171-residue chain is ATP synthase subunit b (171 aa).

A helical transmembrane segment spans residues 19–39; it reads VGVGLILFIAIVIWAKAPAMI.

This sequence belongs to the ATPase B chain family. F-type ATPases have 2 components, F(1) - the catalytic core - and F(0) - the membrane proton channel. F(1) has five subunits: alpha(3), beta(3), gamma(1), delta(1), epsilon(1). F(0) has three main subunits: a(1), b(2) and c(10-14). The alpha and beta chains form an alternating ring which encloses part of the gamma chain. F(1) is attached to F(0) by a central stalk formed by the gamma and epsilon chains, while a peripheral stalk is formed by the delta and b chains.

It localises to the cell inner membrane. In terms of biological role, f(1)F(0) ATP synthase produces ATP from ADP in the presence of a proton or sodium gradient. F-type ATPases consist of two structural domains, F(1) containing the extramembraneous catalytic core and F(0) containing the membrane proton channel, linked together by a central stalk and a peripheral stalk. During catalysis, ATP synthesis in the catalytic domain of F(1) is coupled via a rotary mechanism of the central stalk subunits to proton translocation. Component of the F(0) channel, it forms part of the peripheral stalk, linking F(1) to F(0). The protein is ATP synthase subunit b of Caulobacter sp. (strain K31).